Here is a 304-residue protein sequence, read N- to C-terminus: MIDVIVLGAAAGGGFPQWNSAAPGCVAARTRQGAKARTQASLAVSADGKRWFILNASPDLRQQIIDTPALHHQGSLRGTPIQGVVLTCGEIDAITGLLTLREREPFTLMGSDSTLQQLADNPIFGALDPEIVPRVPLILDEATSLMNKDGIPSGLLLTAFAVPGKAPLYAEAAGSRPDETLGLSITDGCKTMLFIPGCAQITSEIVERVAAADLVFFDGTLWRDDEMIRAGLSPKSGQRMGHVSVNDAGGPVECFTTCEKPRKVLIHINNSNPILFEDSPERKDVERAGWTVAEDGMTFRLDTP.

It belongs to the PqqB family.

It participates in cofactor biosynthesis; pyrroloquinoline quinone biosynthesis. Its function is as follows. May be involved in the transport of PQQ or its precursor to the periplasm. In Gluconobacter oxydans (strain 621H) (Gluconobacter suboxydans), this protein is Coenzyme PQQ synthesis protein B.